Here is a 680-residue protein sequence, read N- to C-terminus: E3 ubiquitin-protein ligase Midline-1 (680 aa).

Residues 10 to 60 form an RING-type zinc finger; the sequence is CPICLELFEDPLLLPCAHSLCFNCAHRILVSHCATNEPVESINAFQCPTCR. Residues Ser-92 and Ser-96 each carry the phosphoserine modification. 2 B box-type zinc fingers span residues 116 to 165 and 172 to 212; these read KVLC…IEPI and GLMC…VAAL. Zn(2+)-binding residues include Cys-119, Cys-122, Cys-134, Cys-137, Cys-142, Cys-145, His-150, His-159, Cys-175, His-178, Cys-198, and His-204. Residues 205–264 are a coiled coil; that stretch reads RDHQVAALSERYDKLKQNLESNLTNLIKRNTELETLLAKLIQTCQHVEVNASRQEAKLTE. In terms of domain architecture, COS spans 320-379; that stretch reads LKENDHARFLQTAKNITERVSMATASSQVLIPEINLNDTFDTFALDFSREKKLLECLDYL. Positions 384 to 494 constitute a Fibronectin type-III domain; that stretch reads PPAIREELCT…RSSEPGKLKT (111 aa). The span at 484 to 498 shows a compositional bias: polar residues; it reads SRSSEPGKLKTNSQP. Disordered regions lie at residues 484-503 and 516-535; these read SRSSEPGKLKTNSQPFRLDP and NLTVERDESSSKKSHAPERF. The B30.2/SPRY domain occupies 495–672; that stretch reads NSQPFRLDPK…IVTGLPIPDH (178 aa). Residues 516 to 533 show a composition bias toward basic and acidic residues; sequence NLTVERDESSSKKSHAPE. Phosphoserine is present on Ser-524.

The protein belongs to the TRIM/RBCC family. As to quaternary structure, homodimer or heterodimer with MID2. Interacts with IGBP1. Phosphorylated. As to expression, ubiquitously expressed in fetus and adult. At 9 dpc-10.5 dpc, highest expression found in frontonasal processes, branchial arches and CNS. From 12.5 dpc to 16.5 dpc, high levels found in rostral part of CNS. At 14.5 dpc, begins to be highly expressed in kidney and lung. At 16.5 dpc, highly expressed in the mucosa of the hindgut and cutaneous region of the stomach.

It localises to the cytoplasm. The protein localises to the cytoskeleton. It carries out the reaction S-ubiquitinyl-[E2 ubiquitin-conjugating enzyme]-L-cysteine + [acceptor protein]-L-lysine = [E2 ubiquitin-conjugating enzyme]-L-cysteine + N(6)-ubiquitinyl-[acceptor protein]-L-lysine.. Functionally, has E3 ubiquitin ligase activity towards IGBP1, promoting its monoubiquitination, which results in deprotection of the catalytic subunit of protein phosphatase PP2A, and its subsequent degradation by polyubiquitination. The protein is E3 ubiquitin-protein ligase Midline-1 (Mid1) of Mus musculus (Mouse).